The sequence spans 239 residues: Small ribosomal subunit protein uS2 (239 aa).

This sequence belongs to the universal ribosomal protein uS2 family.

In Francisella tularensis subsp. holarctica (strain FTNF002-00 / FTA), this protein is Small ribosomal subunit protein uS2.